A 42-amino-acid chain; its full sequence is Large ribosomal subunit protein bL36 (42 aa).

This sequence belongs to the bacterial ribosomal protein bL36 family.

This Anaplasma marginale (strain St. Maries) protein is Large ribosomal subunit protein bL36.